We begin with the raw amino-acid sequence, 208 residues long: Protein-L-isoaspartate O-methyltransferase (208 aa).

The active site involves Ser59.

The protein belongs to the methyltransferase superfamily. L-isoaspartyl/D-aspartyl protein methyltransferase family.

It localises to the cytoplasm. The catalysed reaction is [protein]-L-isoaspartate + S-adenosyl-L-methionine = [protein]-L-isoaspartate alpha-methyl ester + S-adenosyl-L-homocysteine. Catalyzes the methyl esterification of L-isoaspartyl residues in peptides and proteins that result from spontaneous decomposition of normal L-aspartyl and L-asparaginyl residues. It plays a role in the repair and/or degradation of damaged proteins. This is Protein-L-isoaspartate O-methyltransferase from Vibrio parahaemolyticus serotype O3:K6 (strain RIMD 2210633).